Here is a 106-residue protein sequence, read N- to C-terminus: UPF0235 protein OCAR_4310/OCA5_c02140 (106 aa).

The protein belongs to the UPF0235 family.

The chain is UPF0235 protein OCAR_4310/OCA5_c02140 from Afipia carboxidovorans (strain ATCC 49405 / DSM 1227 / KCTC 32145 / OM5) (Oligotropha carboxidovorans).